Reading from the N-terminus, the 1114-residue chain is Proto-oncogene tyrosine-protein kinase receptor Ret (1114 aa).

The N-terminal stretch at 1-28 (MAKATSGAAGLRLLLLLLLPLLGKVALG) is a signal peptide. Residues 29 to 153 (LYFSRDAYWE…RVYFSFFNTS (125 aa)) are cadherin-like region 1 (CLD1). Topologically, residues 29-635 (LYFSRDAYWE…QDPLCDELCR (607 aa)) are extracellular. The N-linked (GlcNAc...) asparagine glycan is linked to asparagine 98. A disulfide bridge connects residues cysteine 137 and cysteine 142. Asparagine 151 is a glycosylation site (N-linked (GlcNAc...) asparagine). 2 disulfides stabilise this stretch: cysteine 157/cysteine 197 and cysteine 166/cysteine 243. The Cadherin domain occupies 168–272 (PETRPSFRIR…YDEDDSAPTF (105 aa)). Residues glutamate 178 and asparagine 179 each contribute to the Ca(2+) site. The N-linked (GlcNAc...) asparagine glycan is linked to asparagine 199. Residues aspartate 230, glutamate 232, aspartate 264, glutamate 265, aspartate 266, aspartate 267, serine 268, aspartate 300, and aspartate 302 each coordinate Ca(2+). The cadherin-like region 3 (CLD3) stretch occupies residues 265–379 (EDDSAPTFPA…MQLAVLVNDS (115 aa)). Asparagine 336, asparagine 343, asparagine 361, asparagine 367, and asparagine 377 each carry an N-linked (GlcNAc...) asparagine glycan. Aspartate 378 contributes to the Ca(2+) binding site. An N-linked (GlcNAc...) asparagine glycan is attached at asparagine 394. The segment at 405–506 (PSTYSLSVSR…QAQLLVTVEG (102 aa)) is cadherin-like region 4 (CLD4). A disulfide bridge links cysteine 426 with cysteine 430. N-linked (GlcNAc...) asparagine glycans are attached at residues asparagine 448 and asparagine 468. 4 cysteine pairs are disulfide-bonded: cysteine 449–cysteine 478, cysteine 515–cysteine 531, cysteine 519–cysteine 541, and cysteine 528–cysteine 558. The N-linked (GlcNAc...) asparagine glycan is linked to asparagine 554. Threonine 564, cysteine 565, aspartate 567, histidine 569, glutamate 574, and aspartate 584 together coordinate Ca(2+). 5 disulfide bridges follow: cysteine 565-cysteine 581, cysteine 570-cysteine 585, cysteine 609-cysteine 620, cysteine 611-cysteine 618, and cysteine 630-cysteine 634. The helical transmembrane segment at 636–657 (TVIAAAVLFSFIVSVLLSAFCI) threads the bilayer. At 658-1114 (HCYHKFAHKP…AAKLMDTFDS (457 aa)) the chain is on the cytoplasmic side. Tyrosine 687 carries the phosphotyrosine; by autocatalysis modification. An O-linked (GlcNAc) serine glycan is attached at serine 688. Serine 696 is modified (phosphoserine). A Protein kinase domain is found at 724 to 1016 (LVLGKTLGEG…KMMVKRRDYL (293 aa)). ATP is bound by residues 730-738 (LGEGEFGKV) and lysine 758. 805-807 (EYA) contributes to the semaxanib binding site. 3 positions are modified to phosphotyrosine; by autocatalysis: tyrosine 806, tyrosine 809, and tyrosine 826. Aspartate 874 functions as the Proton acceptor in the catalytic mechanism. 8 positions are modified to phosphotyrosine; by autocatalysis: tyrosine 900, tyrosine 905, tyrosine 981, tyrosine 1015, tyrosine 1029, tyrosine 1062, tyrosine 1090, and tyrosine 1096.

It belongs to the protein kinase superfamily. Tyr protein kinase family. As to quaternary structure, phosphorylated form interacts with the PBT domain of DOK2, DOK4 and DOK5. The phosphorylated form interacts with PLCG1 and GRB7. Interacts (not phosphorylated) with PTK2/FAK1 (via FERM domain). Extracellular cell-membrane anchored RET cadherin fragments form complex in neurons with reduced trophic status, preferentially at the contact sites between somas. Interacts with AIP in the pituitary gland; this interaction prevents the formation of the AIP-survivin complex. Interacts (inactive) with CBLC and CD2AP; dissociates upon activation by GDNF which increases CBLC:CD2AP interaction. Requires Ca(2+) as cofactor. In terms of processing, autophosphorylated on C-terminal tyrosine residues upon ligand stimulation. Post-translationally, proteolytically cleaved by caspase-3. The soluble RET kinase fragment is able to induce cell death. The extracellular cell-membrane anchored RET cadherin fragment accelerates cell adhesion in sympathetic neurons.

The protein resides in the cell membrane. It localises to the endosome membrane. It carries out the reaction L-tyrosyl-[protein] + ATP = O-phospho-L-tyrosyl-[protein] + ADP + H(+). Its activity is regulated as follows. Repressed by 4-(3-hydroxyanilino)-quinolines derivatives, indolin-2-one-derivatives, 2-(alkylsulfanyl)-4-(3-thienyl) nicotinonitrile analogs, 3- and 4-substituted beta-carbolin-1-ones, vandetanib, motesanib, sorafenib (BAY 43-9006), cabozantinib (XL184), lenvatinib, sunitinib, nintedanib, and withaferin A (WA). Inactivation by sorafenib both reduces kinase activity and promotes lysosomal degradation. In terms of biological role, receptor tyrosine-protein kinase involved in numerous cellular mechanisms including cell proliferation, neuronal navigation, cell migration, and cell differentiation in response to glia cell line-derived growth family factors (GDNF, NRTN, ARTN, PSPN and GDF15). In contrast to most receptor tyrosine kinases, RET requires not only its cognate ligands but also coreceptors, for activation. GDNF ligands (GDNF, NRTN, ARTN, PSPN and GDF15) first bind their corresponding GDNFR coreceptors (GFRA1, GFRA2, GFRA3, GFRA4 and GFRAL, respectively), triggering RET autophosphorylation and activation, leading to activation of downstream signaling pathways, including the MAPK- and AKT-signaling pathways. Acts as a dependence receptor via the GDNF-GFRA1 signaling: in the presence of the ligand GDNF in somatotrophs within pituitary, promotes survival and down regulates growth hormone (GH) production, but triggers apoptosis in absence of GDNF. Required for the molecular mechanisms orchestration during intestine organogenesis via the ARTN-GFRA3 signaling: involved in the development of enteric nervous system and renal organogenesis during embryonic life, and promotes the formation of Peyer's patch-like structures, a major component of the gut-associated lymphoid tissue. Mediates, through interaction with GDF15-receptor GFRAL, GDF15-induced cell-signaling in the brainstem which triggers an aversive response, characterized by nausea, vomiting, and/or loss of appetite in response to various stresses. Modulates cell adhesion via its cleavage by caspase in sympathetic neurons and mediates cell migration in an integrin (e.g. ITGB1 and ITGB3)-dependent manner. Also active in the absence of ligand, triggering apoptosis through a mechanism that requires receptor intracellular caspase cleavage. Triggers the differentiation of rapidly adapting (RA) mechanoreceptors. Involved in the development of the neural crest. Regulates nociceptor survival and size. Phosphorylates PTK2/FAK1. Isoform 1 in complex with GFRAL induces higher activation of MAPK-signaling pathway than isoform 2 in complex with GFRAL. This Homo sapiens (Human) protein is Proto-oncogene tyrosine-protein kinase receptor Ret.